The following is a 417-amino-acid chain: Cotranscriptional regulator ARB2A (417 aa).

Positions 1 to 18 (MSISLSSLIFLPIWINMA) are cleaved as a signal peptide. N-linked (GlcNAc...) asparagine glycosylation is present at N26. The tract at residues 208-248 (KQKMHKQSSSSDGTDEPAGKRERRDKVSKETKKRRDFYEKY) is disordered. Residues 224–237 (PAGKRERRDKVSKE) are compositionally biased toward basic and acidic residues. The active-site Nucleophile is S294. The segment at 398-417 (SSSQKPALTRRSHRIKHEEL) is disordered. Over residues 405-417 (LTRRSHRIKHEEL) the composition is skewed to basic residues. The Prevents secretion from ER signature appears at 414-417 (HEEL).

Belongs to the ARB2A family. In terms of assembly, interacts with AGO2. Found in a complex, composed of AGO2, CHD7 and ARB2A.

The protein resides in the nucleus. It is found in the cytoplasm. Its subcellular location is the endoplasmic reticulum. Functionally, plays a role in the regulation of alternative splicing, by interacting with AGO2 and CHD7. Seems to be required for stabilizing protein-protein interactions at the chromatin-spliceosome interface. May have hydrolase activity. The chain is Cotranscriptional regulator ARB2A (Arb2a) from Mus musculus (Mouse).